We begin with the raw amino-acid sequence, 242 residues long: Protein crossbronx (242 aa).

The UBC core domain maps to 20-176; sequence QQEYKILAEY…VQENIKESKA (157 aa).

This sequence belongs to the ubiquitin-conjugating enzyme family. FTS subfamily.

This chain is Protein crossbronx (cbx), found in Drosophila ananassae (Fruit fly).